The following is a 274-amino-acid chain: Elongation factor Ts (274 aa).

The involved in Mg(2+) ion dislocation from EF-Tu stretch occupies residues 79–82 (TDFV).

The protein belongs to the EF-Ts family.

The protein localises to the cytoplasm. Its function is as follows. Associates with the EF-Tu.GDP complex and induces the exchange of GDP to GTP. It remains bound to the aminoacyl-tRNA.EF-Tu.GTP complex up to the GTP hydrolysis stage on the ribosome. This chain is Elongation factor Ts, found in Porphyromonas gingivalis (strain ATCC 33277 / DSM 20709 / CIP 103683 / JCM 12257 / NCTC 11834 / 2561).